The primary structure comprises 225 residues: 2-C-methyl-D-erythritol 4-phosphate cytidylyltransferase (225 aa).

It belongs to the IspD/TarI cytidylyltransferase family. IspD subfamily.

The enzyme catalyses 2-C-methyl-D-erythritol 4-phosphate + CTP + H(+) = 4-CDP-2-C-methyl-D-erythritol + diphosphate. The protein operates within isoprenoid biosynthesis; isopentenyl diphosphate biosynthesis via DXP pathway; isopentenyl diphosphate from 1-deoxy-D-xylulose 5-phosphate: step 2/6. Catalyzes the formation of 4-diphosphocytidyl-2-C-methyl-D-erythritol from CTP and 2-C-methyl-D-erythritol 4-phosphate (MEP). In Haemophilus influenzae (strain PittGG), this protein is 2-C-methyl-D-erythritol 4-phosphate cytidylyltransferase.